The chain runs to 333 residues: Ketol-acid reductoisomerase (NADP(+)) (333 aa).

The KARI N-terminal Rossmann domain maps to 2–182; the sequence is ANIYYDADCD…GGGRAGILET (181 aa). Residues 25 to 28, K48, S51, S53, and 83 to 86 contribute to the NADP(+) site; these read YGSQ and DTIQ. H108 is a catalytic residue. G134 contributes to the NADP(+) binding site. Positions 183–331 constitute a KARI C-terminal knotted domain; sequence SFREETETDL…KKLRSMMKWL (149 aa). The Mg(2+) site is built by D191, E195, E227, and E231. Residue S252 coordinates substrate.

Belongs to the ketol-acid reductoisomerase family. It depends on Mg(2+) as a cofactor.

The catalysed reaction is (2R)-2,3-dihydroxy-3-methylbutanoate + NADP(+) = (2S)-2-acetolactate + NADPH + H(+). It catalyses the reaction (2R,3R)-2,3-dihydroxy-3-methylpentanoate + NADP(+) = (S)-2-ethyl-2-hydroxy-3-oxobutanoate + NADPH + H(+). It functions in the pathway amino-acid biosynthesis; L-isoleucine biosynthesis; L-isoleucine from 2-oxobutanoate: step 2/4. The protein operates within amino-acid biosynthesis; L-valine biosynthesis; L-valine from pyruvate: step 2/4. In terms of biological role, involved in the biosynthesis of branched-chain amino acids (BCAA). Catalyzes an alkyl-migration followed by a ketol-acid reduction of (S)-2-acetolactate (S2AL) to yield (R)-2,3-dihydroxy-isovalerate. In the isomerase reaction, S2AL is rearranged via a Mg-dependent methyl migration to produce 3-hydroxy-3-methyl-2-ketobutyrate (HMKB). In the reductase reaction, this 2-ketoacid undergoes a metal-dependent reduction by NADPH to yield (R)-2,3-dihydroxy-isovalerate. This chain is Ketol-acid reductoisomerase (NADP(+)), found in Leptospira borgpetersenii serovar Hardjo-bovis (strain JB197).